The following is a 716-amino-acid chain: Macrophage-expressed gene 1 protein (716 aa).

A signal peptide spans 1–20 (MNNFRATILFWAVAAWVTSG). In terms of domain architecture, MACPF spans 30 to 345 (GVQKCKNALK…TAVKRYYTFN (316 aa)). A disulfide bridge connects residues cysteine 34 and cysteine 70. 2 beta stranded membrane-spanning segments follow: residues 113–120 (YSINTELS) and 127–132 (GKFSTE). N-linked (GlcNAc...) asparagine glycans are attached at residues asparagine 168 and asparagine 185. Transmembrane regions (beta stranded) follow at residues 235–244 (AVTASAGLAF) and 248–256 (VNFKFEENY). N-linked (GlcNAc...) asparagine glycosylation occurs at asparagine 269. Cysteine 350 and cysteine 369 form a disulfide bridge. Asparagine 375 carries N-linked (GlcNAc...) asparagine glycosylation. Disulfide bonds link cysteine 385/cysteine 397, cysteine 435/cysteine 449, cysteine 439/cysteine 445, cysteine 534/cysteine 572, and cysteine 557/cysteine 577. Residues 413 to 656 (PSGYSPVRLL…GDGGGLSGGA (244 aa)) are P2. The helical transmembrane segment at 656–676 (AAAGVTLGVTTILAVVITLAI) threads the bilayer. A disordered region spans residues 693-716 (RQSLVPGTAATGDTTYQEQGQSPA). Positions 703 to 716 (TGDTTYQEQGQSPA) are enriched in polar residues.

The protein belongs to the MPEG1 family. In terms of assembly, homooligomer; predominantly forms a homooligomeric arc-shaped pore complex instead of complete rings of 16 subunits. In terms of processing, proteolytically processed in two steps to generate the Macrophage-expressed gene 1 protein, processed form: cleaved by trypsin in proximity of the helical transmembrane domain releases the ectodomain into the lysosomal lumen to orient the pore-forming domain toward the endogenous membranes, and processed by the asparagine endopeptidase (LGMN). Proteolytic processing in antigen-containing vesicles is pH-dependent. Monoubiquitinated in response to bacterial infection; ubiquitination is required for vesicular localization and antibacterial activity and can be blocked by bacterial cell cycle inhibiting factor (cif).

It is found in the cytoplasmic vesicle membrane. The protein resides in the cytoplasmic vesicle. It localises to the phagosome membrane. With respect to regulation, forms arc- and ring-shaped pre-pores on top of the membrane at neutral to slightly acidic pH conditions and converts to pores upon acidification. Undergoes transition from the pre-pore to the pore in a processive clockwise hand-over-hand process. In the pore state, 2 alpha-helical regions refold into transmembrane hairpins (TMH1 and TMH2) in each protomer that form in the ensemble complex giant beta-barrel transmembrane pores. In terms of biological role, pore-forming protein involved in both innate and adaptive immunity. Plays a central role in antigen cross-presentation in dendritic cells by forming a pore in antigen-containing compartments, thereby promoting delivery of antigens for cross-presentation. Also involved in innate immune response following bacterial infection; shows antibacterial activity against a wide spectrum of Gram-positive, Gram-negative and acid-fast bacteria. Reduces the viability of the intracytosolic pathogen L.monocytogenes by inhibiting acidification of the phagocytic vacuole of host cells which restricts bacterial translocation from the vacuole to the cytosol. Required for the antibacterial activity of reactive oxygen species and nitric oxide. Pore-forming protein that plays a central role in antigen cross-presentation in dendritic cells by mediating delivery of antigens for cross-presentation. Dendritic cells bridge innate and adaptive immunity by capturing exogenous antigens on MHC class-I molecules and presenting them to naive CD8(+) T-cells. Acts by forming a pore in antigen-containing compartments, promoting the release of antigens into the cytosol, enabling generation of MHCI:peptide complexes and T-cell priming. This is Macrophage-expressed gene 1 protein (MPEG1) from Pongo abelii (Sumatran orangutan).